The following is a 337-amino-acid chain: Glutathione transferase 3 (337 aa).

Over 1-239 (MPTKSTFSRW…NKYQYTLDFC (239 aa)) the chain is Cytoplasmic. Phosphoserine occurs at positions 66, 72, 99, and 116. The interval 66 to 95 (SMTVDQSKDERNEYGSGSGNGSGSGSCDTA) is disordered. The segment at 107-132 (KEDDDEKPQSGDETSATKPLSSRNAN) is disordered. The segment covering 117-132 (GDETSATKPLSSRNAN) has biased composition (polar residues). Residues 240–260 (LPILTWLLFFRGIPTLVSYYI) form a helical membrane-spanning segment. The Perinuclear space segment spans residues 261 to 313 (NFIRYDLNIELDPMTFNLTKFLISLAIFKTCNNKNIDFHSFRCVNQLWTQLCT). Residues 314–336 (VNRSLGMVPLVFSMVSCLLTLYV) form a helical membrane-spanning segment. A topological domain (cytoplasmic) is located at residue Leu337.

The protein resides in the nucleus membrane. The chain is Glutathione transferase 3 (GTT3) from Saccharomyces cerevisiae (strain ATCC 204508 / S288c) (Baker's yeast).